A 714-amino-acid chain; its full sequence is WD repeat and coiled-coil-containing protein (714 aa).

WD repeat units follow at residues 55–98 (GQFE…LEQN) and 154–194 (KGSG…LVPC). 2 disordered regions span residues 432-454 (EEST…SENF) and 531-564 (QASR…KEKN). Residues 567 to 595 (QLTQNMERIFTRFAEVQQCLSEIREFTQN) are a coiled coil. The tract at residues 685–714 (RSARRKSPARPPSGADDFPPESPKSPSMEK) is disordered.

This is WD repeat and coiled-coil-containing protein (wdcp) from Danio rerio (Zebrafish).